Reading from the N-terminus, the 103-residue chain is N(4)-acetylcytidine amidohydrolase (103 aa).

In terms of domain architecture, ASCH spans 6–101 (ITFFQRFQDD…QTQFYVIEFK (96 aa)). K21 acts as the Proton acceptor in catalysis. Residue T24 is the Nucleophile of the active site. The active-site Proton donor is the E74.

It belongs to the N(4)-acetylcytidine amidohydrolase family.

It carries out the reaction N(4)-acetylcytidine + H2O = cytidine + acetate + H(+). The enzyme catalyses N(4)-acetyl-2'-deoxycytidine + H2O = 2'-deoxycytidine + acetate + H(+). It catalyses the reaction N(4)-acetylcytosine + H2O = cytosine + acetate + H(+). Functionally, catalyzes the hydrolysis of N(4)-acetylcytidine (ac4C). The protein is N(4)-acetylcytidine amidohydrolase (yqfB) of Escherichia coli O8 (strain IAI1).